A 1065-amino-acid chain; its full sequence is Inversin (1065 aa).

ANK repeat units follow at residues serine 13–aspartate 42, phenylalanine 47–lysine 76, serine 80–lysine 110, glutamate 113–threonine 144, asparagine 148–isoleucine 177, glutamate 181–leucine 213, glutamate 220–serine 250, leucine 254–isoleucine 283, glutamine 288–aspartate 317, glutamate 321–isoleucine 350, tyrosine 356–alanine 385, methionine 389–leucine 418, aspartate 422–valine 451, alanine 455–isoleucine 484, glutamate 488–glutamine 517, and glutamate 523–alanine 553. Asparagine 75 is modified (3-hydroxyasparagine). The short motif at arginine 490 to asparagine 498 is the D-box 1 element. The 30-residue stretch at glutamine 555–lysine 584 folds into the IQ 1 domain. Positions arginine 589–aspartate 616 are enriched in basic and acidic residues. 2 disordered regions span residues arginine 589–asparagine 833 and histidine 847–glycine 886. Residues proline 627 to proline 640 are compositionally biased toward polar residues. Serine 661 is modified (phosphoserine). The span at serine 677–arginine 686 shows a compositional bias: polar residues. Composition is skewed to basic and acidic residues over residues arginine 687–lysine 697, arginine 706–arginine 715, glutamate 723–alanine 736, glycine 752–arginine 762, histidine 770–alanine 786, and glutamate 853–glutamate 863. The D-box 2 signature appears at arginine 909 to asparagine 917. Residues lysine 916–leucine 945 form the IQ 2 domain. Residues threonine 976–serine 999 form a disordered region. Over residues proline 983–lysine 994 the composition is skewed to low complexity.

Binds calmodulin via its IQ domains. Interacts with APC2. Interacts with alpha-, beta-, and gamma-catenin. Interacts with N-cadherin (CDH2). Interacts with microtubules. Interacts with NPHP1. Interacts with DVL1, PRICKLE (PRICKLE1 or PRICKLE2) and Strabismus (VANGL1 or VANGL2). Interacts with IQCB1; the interaction likely requires additional interactors. Component of a complex containing at least ANKS6, INVS, NEK8 and NPHP3. ANKS6 may organize complex assembly by linking INVS and NPHP3 to NEK8 and INVS may target the complex to the proximal ciliary axoneme. In terms of processing, may be ubiquitinated via its interaction with APC2. Hydroxylated at Asn-75, most probably by HIF1AN. Widely expressed. Strongly expressed in the primary cilia of renal tubular cells.

It localises to the cytoplasm. It is found in the cytoskeleton. Its subcellular location is the spindle. The protein localises to the membrane. The protein resides in the nucleus. It localises to the cell projection. It is found in the cilium. Required for normal renal development and establishment of left-right axis. Probably acts as a molecular switch between different Wnt signaling pathways. Inhibits the canonical Wnt pathway by targeting cytoplasmic disheveled (DVL1) for degradation by the ubiquitin-proteasome. This suggests that it is required in renal development to oppose the repression of terminal differentiation of tubular epithelial cells by Wnt signaling. Involved in the organization of apical junctions in kidney cells together with NPHP1, NPHP4 and RPGRIP1L/NPHP8. Does not seem to be strictly required for ciliogenesis. The polypeptide is Inversin (INVS) (Homo sapiens (Human)).